The chain runs to 2409 residues: Reducing polyketide synthase FUB1 (2409 aa).

Low complexity predominate over residues 1–43 (MTLSNGSNGANGTSNGHGAHPSANGFHNAANGGANNGTPNGGA). Positions 1–49 (MTLSNGSNGANGTSNGHGAHPSANGFHNAANGGANNGTPNGGAEYNASL) are disordered. In terms of domain architecture, Ketosynthase family 3 (KS3) spans 57–479 (SSAIAVIGVS…GANAHAVLDD (423 aa)). Residues cysteine 230, histidine 365, and histidine 403 each act as for beta-ketoacyl synthase activity in the active site. Positions 608-929 (TFIFTGQGAQ…FSAIKRKQDA (322 aa)) are malonyl-CoA:ACP transacylase (MAT) domain. Catalysis depends on serine 699, which acts as the For malonyltransferase activity. An N-terminal hotdog fold region spans residues 994–1127 (LELLGVRDPR…GLVSTSYKRE (134 aa)). In terms of domain architecture, PKS/mFAS DH spans 994 to 1307 (LELLGVRDPR…TVPLRGASDP (314 aa)). Residues 995–1302 (ELLGVRDPRS…LEGCKTVPLR (308 aa)) form a dehydratase (DH) domain region. Histidine 1026 functions as the Proton acceptor; for dehydratase activity in the catalytic mechanism. The segment at 1155 to 1307 (LPSVDPTVFY…TVPLRGASDP (153 aa)) is C-terminal hotdog fold. The Proton donor; for dehydratase activity role is filled by aspartate 1220. Positions 1713–2025 (GLLDTLEYLS…SGGHVGKIVL (313 aa)) are enoyl reductase (ER) domain. A ketoreductase (KR) domain region spans residues 2049-2225 (ATYVLIGGLG…AATSINLSLV (177 aa)). The region spanning 2328-2405 (EVYEIVLQQL…GFAKKVMAKS (78 aa)) is the Carrier domain. Residue serine 2365 is modified to O-(pantetheine 4'-phosphoryl)serine.

Its pathway is mycotoxin biosynthesis. Its function is as follows. Reducing polyketide synthase; part of the gene cluster that mediates the biosynthesis of fusaric acid, a mycotoxin with low to moderate toxicity to animals and humans, but with high phytotoxic properties. L-aspartate is suggested as fusaric acid amino acid precursor that is activated and further processed to O-acetyl-L-homoserine by cluster enzymes aspartate kinase FUB3 and homoserine O-acetyltransferase FUB5, as well as enzymes of the primary metabolism. The polyketide synthase (PKS) FUB1 generates the triketide trans-2-hexenal which is presumptively released by the hydrolase FUB4 and linked to the NRPS-bound amino acid precursor by NAD(P)-dependent dehydrogenase FUB6. FUB1, FUB4, and the non-canonical NRPS Fub8 may form an enzyme complex. Further processing of the NRPS-bound intermediate might be carried out by FUB6 and the sulfhydrylase FUB7, enabling a spontaneous electrocyclization to close the carbon backbone of fusaric acid. Dihydrofusaric acid is likely to be released via reduction by the thioester reductase (TR) domain of FUB8 whereupon the final oxidation to fusaric acid may (also) be performed by the FMN-dependent dehydrogenase FUB9. This Gibberella moniliformis (strain M3125 / FGSC 7600) (Maize ear and stalk rot fungus) protein is Reducing polyketide synthase FUB1.